A 129-amino-acid chain; its full sequence is Glycine cleavage system H protein (129 aa).

Positions 24–106 constitute a Lipoyl-binding domain; the sequence is TYTVGITEHA…YAGGWIFKIK (83 aa). N6-lipoyllysine is present on Lys-65.

It belongs to the GcvH family. As to quaternary structure, the glycine cleavage system is composed of four proteins: P, T, L and H. Requires (R)-lipoate as cofactor.

In terms of biological role, the glycine cleavage system catalyzes the degradation of glycine. The H protein shuttles the methylamine group of glycine from the P protein to the T protein. The chain is Glycine cleavage system H protein from Escherichia coli O45:K1 (strain S88 / ExPEC).